Consider the following 763-residue polypeptide: MGPPLLPKHVTAVIKCQKDPMKALEMFNSMRKEVGFKHTLSTYRSVIEKLGYYGKFEAMEEVLVDMRENVGNHMLEGVYVGAMKNYGRKGKVQEAVNVFERMDFYDCEPTVFSYNAIMSVLVDSGYFDQAHKVYMRMRDRGITPDVYSFTIRMKSFCKTSRPHAALRLLNNMSSQGCEMNVVAYCTVVGGFYEENFKAEGYELFGKMLASGVSLCLSTFNKLLRVLCKKGDVKECEKLLDKVIKRGVLPNLFTYNLFIQGLCQRGELDGAVRMVGCLIEQGPKPDVITYNNLIYGLCKNSKFQEAEVYLGKMVNEGLEPDSYTYNTLIAGYCKGGMVQLAERIVGDAVFNGFVPDQFTYRSLIDGLCHEGETNRALALFNEALGKGIKPNVILYNTLIKGLSNQGMILEAAQLANEMSEKGLIPEVQTFNILVNGLCKMGCVSDADGLVKVMISKGYFPDIFTFNILIHGYSTQLKMENALEILDVMLDNGVDPDVYTYNSLLNGLCKTSKFEDVMETYKTMVEKGCAPNLFTFNILLESLCRYRKLDEALGLLEEMKNKSVNPDAVTFGTLIDGFCKNGDLDGAYTLFRKMEEAYKVSSSTPTYNIIIHAFTEKLNVTMAEKLFQEMVDRCLGPDGYTYRLMVDGFCKTGNVNLGYKFLLEMMENGFIPSLTTLGRVINCLCVEDRVYEAAGIIHRMVQKGLVPEAVNTICDVDKKEVAAPKLVLEDLLKKSCITYYAYELLFDGLRDKRLRKKKGFTVVAI.

19 PPR repeats span residues 39–69 (TLST…MREN), 75–109 (LEGV…DCEP), 110–144 (TVFS…GITP), 145–179 (DVYS…GCEM), 180–214 (NVVA…GVSL), 215–249 (CLST…GVLP), 250–284 (NLFT…GPKP), 285–319 (DVIT…GLEP), 320–354 (DSYT…GFVP), 355–389 (DQFT…GIKP), 390–424 (NVIL…GLIP), 425–459 (EVQT…GYFP), 460–494 (DIFT…GVDP), 495–529 (DVYT…GCAP), 530–564 (NLFT…SVNP), 565–595 (DAVT…MEEA), 601–635 (STPT…CLGP), 636–670 (DGYT…GFIP), and 671–705 (SLTT…GLVP).

It belongs to the PPR family. P subfamily.

In Arabidopsis thaliana (Mouse-ear cress), this protein is Putative pentatricopeptide repeat-containing protein At1g74580.